The sequence spans 273 residues: MLGYLAAAALCLAAVLLMRLDHLPLVDIPGLGYIFPQQCELSEGRLMSKEELSVYDGGPGSSGIYLAILGQVFDVHKGSKHYGPGGSYSFFAGKDASRAYMTGDFTEKGLVDDVTELSPLQMLHLHNWLSFYQQNYITIGKLTGRFYDESGNPTKALEDALKVIDIGLKLKEEREEENKQFPPCNSEWSSESKRVWCSKNSGGIQRDWVGVPRKMYTAGTNGYRCVCVRNFGPPSEQPDSTEHNDRGDLDNPMLHEYEDCNPLFEWCFLKNGT.

Residues 1-22 (MLGYLAAAALCLAAVLLMRLDH) form the signal peptide. In terms of domain architecture, Cytochrome b5 heme-binding spans 44–143 (GRLMSKEELS…QNYITIGKLT (100 aa)).

This sequence belongs to the cytochrome b5 family. MAPR subfamily.

It is found in the secreted. Its function is as follows. Heme-binding protein which promotes neuronal but not astrocyte differentiation. The sequence is that of Neuferricin (cyb5d2) from Xenopus tropicalis (Western clawed frog).